The following is a 288-amino-acid chain: UTP--glucose-1-phosphate uridylyltransferase (288 aa).

The protein belongs to the UDPGP type 2 family.

It carries out the reaction alpha-D-glucose 1-phosphate + UTP + H(+) = UDP-alpha-D-glucose + diphosphate. Its pathway is glycolipid metabolism; diglucosyl-diacylglycerol biosynthesis. Its function is as follows. Catalyzes the formation of UDP-glucose from glucose-1-phosphate and UTP. This is an intermediate step in the biosynthesis of diglucosyl-diacylglycerol (Glc2-DAG), i.e. the predominant glycolipid found in the S.aureus membrane, which is also used as a membrane anchor for lipoteichoic acid (LTA). This chain is UTP--glucose-1-phosphate uridylyltransferase (gtaB), found in Staphylococcus aureus (strain USA300).